The chain runs to 183 residues: Large ribosomal subunit protein uL5 (183 aa).

Belongs to the universal ribosomal protein uL5 family. As to quaternary structure, part of the 50S ribosomal subunit; part of the 5S rRNA/L5/L18/L25 subcomplex. Contacts the 5S rRNA and the P site tRNA. Forms a bridge to the 30S subunit in the 70S ribosome.

In terms of biological role, this is one of the proteins that bind and probably mediate the attachment of the 5S RNA into the large ribosomal subunit, where it forms part of the central protuberance. In the 70S ribosome it contacts protein S13 of the 30S subunit (bridge B1b), connecting the 2 subunits; this bridge is implicated in subunit movement. Contacts the P site tRNA; the 5S rRNA and some of its associated proteins might help stabilize positioning of ribosome-bound tRNAs. The sequence is that of Large ribosomal subunit protein uL5 from Legionella pneumophila (strain Lens).